Consider the following 167-residue polypeptide: U-scoloptoxin(08)-Er5a (167 aa).

The first 22 residues, 1–22 (MKTNCEFPLLCLLIVLVANVEG), serve as a signal peptide directing secretion. The propeptide occupies 23-94 (EVEDTGLKMV…KRLWRNWERR (72 aa)). RLWRNWE repeat units follow at residues 34-40 (RLWRNWE), 61-67 (RLWRNWE), and 86-92 (RLWRNWE). Residue Q95 is modified to Pyrrolidone carboxylic acid. One copy of the RLWRNWE 4; approximate repeat lies at 107 to 113 (ELWRNWE). A propeptide spanning residues 112 to 118 (WEDLKRR) is cleaved from the precursor. Pyrrolidone carboxylic acid is present on Q119. One copy of the RLWRNWE 5 repeat lies at 134–140 (RLWRNWE). Positions 139-167 (WEDNHATLRKRSADSLSRQKRLGKERGKE) are excised as a propeptide. Residues 147–167 (RKRSADSLSRQKRLGKERGKE) are disordered.

This sequence belongs to the scoloptoxin-08 family. Expressed by the venom gland.

The protein resides in the secreted. This is U-scoloptoxin(08)-Er5a from Ethmostigmus rubripes (Giant centipede).